Reading from the N-terminus, the 275-residue chain is Ribosomal RNA small subunit methyltransferase A (275 aa).

S-adenosyl-L-methionine-binding residues include asparagine 21, leucine 23, glycine 48, glutamate 69, aspartate 94, and asparagine 115.

Belongs to the class I-like SAM-binding methyltransferase superfamily. rRNA adenine N(6)-methyltransferase family. RsmA subfamily.

Its subcellular location is the cytoplasm. The catalysed reaction is adenosine(1518)/adenosine(1519) in 16S rRNA + 4 S-adenosyl-L-methionine = N(6)-dimethyladenosine(1518)/N(6)-dimethyladenosine(1519) in 16S rRNA + 4 S-adenosyl-L-homocysteine + 4 H(+). Specifically dimethylates two adjacent adenosines (A1518 and A1519) in the loop of a conserved hairpin near the 3'-end of 16S rRNA in the 30S particle. May play a critical role in biogenesis of 30S subunits. This chain is Ribosomal RNA small subunit methyltransferase A, found in Clostridium botulinum (strain Okra / Type B1).